The primary structure comprises 485 residues: NADH-quinone oxidoreductase subunit N (485 aa).

Transmembrane regions (helical) follow at residues 8–28, 35–55, 71–91, 105–125, 127–147, 159–179, 203–223, 235–255, 271–291, 297–317, 326–346, 373–393, 408–430, and 455–475; these read LIALLPLLIVGLTVVVVMLSI, FLNATLSVIGLNAALVSLWFV, GFAMLYTGLVLLASLATCTFA, FYLLVLIASLGGILLANANHL, ALFLGIELISLPLFGLIGYAF, YTILSAAASSFLLFGMALVYA, LLAGFGLMIVGLGFKLSLVPF, PAPVSTFLATASKIAIFGVVM, VVLGIIAFASIIFGNLMALSQ, LLGYSSISHLGYLLVALIALQ, VGVYLAGYLFSSLGAFGVVSL, AAVMTVMMLSLAGIPMTLGFI, WWLVAAVVVGSAIGLYYYLRVAV, and IVVLISALLVLVLGVWPQPLI.

Belongs to the complex I subunit 2 family. As to quaternary structure, NDH-1 is composed of 13 different subunits. Subunits NuoA, H, J, K, L, M, N constitute the membrane sector of the complex.

The protein resides in the cell inner membrane. The enzyme catalyses a quinone + NADH + 5 H(+)(in) = a quinol + NAD(+) + 4 H(+)(out). Its function is as follows. NDH-1 shuttles electrons from NADH, via FMN and iron-sulfur (Fe-S) centers, to quinones in the respiratory chain. The immediate electron acceptor for the enzyme in this species is believed to be ubiquinone. Couples the redox reaction to proton translocation (for every two electrons transferred, four hydrogen ions are translocated across the cytoplasmic membrane), and thus conserves the redox energy in a proton gradient. This is NADH-quinone oxidoreductase subunit N from Salmonella typhimurium (strain LT2 / SGSC1412 / ATCC 700720).